Consider the following 369-residue polypeptide: Anhydro-N-acetylmuramic acid kinase (369 aa).

Residue 12 to 19 (GTSLDGVD) participates in ATP binding.

Belongs to the anhydro-N-acetylmuramic acid kinase family.

It catalyses the reaction 1,6-anhydro-N-acetyl-beta-muramate + ATP + H2O = N-acetyl-D-muramate 6-phosphate + ADP + H(+). It participates in amino-sugar metabolism; 1,6-anhydro-N-acetylmuramate degradation. Its pathway is cell wall biogenesis; peptidoglycan recycling. In terms of biological role, catalyzes the specific phosphorylation of 1,6-anhydro-N-acetylmuramic acid (anhMurNAc) with the simultaneous cleavage of the 1,6-anhydro ring, generating MurNAc-6-P. Is required for the utilization of anhMurNAc either imported from the medium or derived from its own cell wall murein, and thus plays a role in cell wall recycling. This chain is Anhydro-N-acetylmuramic acid kinase, found in Actinobacillus pleuropneumoniae serotype 7 (strain AP76).